Consider the following 82-residue polypeptide: MKAGIHPDYRTVVFHDTSADVYYRTGSTIKTDRTIELEGTSYPYVTIDVSSASHPYYTGKQKEYSKEGSTARFQQRFGNFFK.

The protein belongs to the bacterial ribosomal protein bL31 family. Type B subfamily. In terms of assembly, part of the 50S ribosomal subunit.

The chain is Large ribosomal subunit protein bL31B from Pectobacterium carotovorum subsp. carotovorum (strain PC1).